Consider the following 388-residue polypeptide: Probable ubiquitin-conjugating enzyme E2 L709 (388 aa).

A UBC core domain is found at 3–162 (NVHKRVIKDI…GNDLMVQKLF (160 aa)). Cys-95 acts as the Glycyl thioester intermediate in catalysis. Residues 195 to 388 (VEEKSAKTSK…SSKSSKTGKK (194 aa)) are disordered. 2 stretches are compositionally biased toward acidic residues: residues 221-238 (SEEE…DSES) and 246-297 (DVVD…ESEE). The segment covering 310-388 (KTTTKSSSTK…SSKSSKTGKK (79 aa)) has biased composition (low complexity).

Belongs to the ubiquitin-conjugating enzyme family.

It catalyses the reaction S-ubiquitinyl-[E1 ubiquitin-activating enzyme]-L-cysteine + [E2 ubiquitin-conjugating enzyme]-L-cysteine = [E1 ubiquitin-activating enzyme]-L-cysteine + S-ubiquitinyl-[E2 ubiquitin-conjugating enzyme]-L-cysteine.. Its pathway is protein modification; protein ubiquitination. Functionally, catalyzes the covalent attachment of ubiquitin to other proteins. This Acanthamoeba polyphaga (Amoeba) protein is Probable ubiquitin-conjugating enzyme E2 L709.